Reading from the N-terminus, the 356-residue chain is Phosphoserine aminotransferase (356 aa).

Residue Arg41 coordinates L-glutamate. Pyridoxal 5'-phosphate is bound by residues 75-76, Trp99, Thr147, Asp166, and Gln189; that span reads AS. Lys190 is modified (N6-(pyridoxal phosphate)lysine). Residue 231-232 participates in pyridoxal 5'-phosphate binding; that stretch reads NT.

This sequence belongs to the class-V pyridoxal-phosphate-dependent aminotransferase family. SerC subfamily. As to quaternary structure, homodimer. It depends on pyridoxal 5'-phosphate as a cofactor.

It is found in the cytoplasm. It carries out the reaction O-phospho-L-serine + 2-oxoglutarate = 3-phosphooxypyruvate + L-glutamate. The enzyme catalyses 4-(phosphooxy)-L-threonine + 2-oxoglutarate = (R)-3-hydroxy-2-oxo-4-phosphooxybutanoate + L-glutamate. Its pathway is amino-acid biosynthesis; L-serine biosynthesis; L-serine from 3-phospho-D-glycerate: step 2/3. It functions in the pathway cofactor biosynthesis; pyridoxine 5'-phosphate biosynthesis; pyridoxine 5'-phosphate from D-erythrose 4-phosphate: step 3/5. Its function is as follows. Catalyzes the reversible conversion of 3-phosphohydroxypyruvate to phosphoserine and of 3-hydroxy-2-oxo-4-phosphonooxybutanoate to phosphohydroxythreonine. This Phocaeicola vulgatus (strain ATCC 8482 / DSM 1447 / JCM 5826 / CCUG 4940 / NBRC 14291 / NCTC 11154) (Bacteroides vulgatus) protein is Phosphoserine aminotransferase.